A 168-amino-acid chain; its full sequence is Cell division inhibitor SulA (168 aa).

Positions 1–20 (MSTQSVSSHNIESSSFSANQ) are disordered. The ftsZ binding stretch occupies residues 105-111 (ALLTGNY). The lon protease binding stretch occupies residues 161 to 168 (KIHSTLYH).

This sequence belongs to the SulA family. Interacts with FtsZ. Post-translationally, is rapidly cleaved and degraded by the Lon protease once DNA damage is repaired.

In terms of biological role, component of the SOS system and an inhibitor of cell division. Accumulation of SulA causes rapid cessation of cell division and the appearance of long, non-septate filaments. In the presence of GTP, binds a polymerization-competent form of FtsZ in a 1:1 ratio, thus inhibiting FtsZ polymerization and therefore preventing it from participating in the assembly of the Z ring. This mechanism prevents the premature segregation of damaged DNA to daughter cells during cell division. The polypeptide is Cell division inhibitor SulA (Pectobacterium atrosepticum (strain SCRI 1043 / ATCC BAA-672) (Erwinia carotovora subsp. atroseptica)).